Here is a 400-residue protein sequence, read N- to C-terminus: N(alpha)-acyl-glutamine aminoacylase (400 aa).

It belongs to the peptidase M20 family. Zn(2+) serves as cofactor.

The catalysed reaction is an N(2)-acyl-L-glutamine + H2O = a carboxylate + L-glutamine. It catalyses the reaction N(2)-[(2E)-3-methylhex-2-enoyl]-L-glutaminate + H2O = (2E)-3-methylhex-2-enoate + L-glutamine. It carries out the reaction N(2)-(3-hydroxy-3-methylhexanoyl)-L-glutaminate + H2O = 3-hydroxy-3-methylhexanoate + L-glutamine. Partial loss of activity with the combination Mn(2+) and chelating agents. Activity is lost in presence of 0.5 mM dithiothreitol. Hydrolyzes odorless N-alpha-acyl-L-glutamine conjugates of short- and medium-chain fatty acids, releasing human axillary malodor compounds. The enzyme is highly specific for the glutamine residue but has a low specificity for the acyl part of the substrate. The two most common products are 3-methyl-2-hexenoic acid (3M2H) and 3-hydroxy-3-methyl-hexanoic acid (HMHA), which are produced from the odorless precursors N-alpha-3-methyl-2-hexenoyl-L-glutamine (3M2H-Gln) and N-alpha-3-hydroxy-3-methylhexanoyl-L-glutamine (HMHA-Gln). In addition, over 28 different carboxylic acids contributing to human body odor are released by this enzyme from odorless axilla secretions, including several aliphatic 3-hydroxy acids with 4-Me branches, 3,4-unsaturated, 4-Et-branched aliphatic acids, and a variety of degradation products of amino acids. The protein is N(alpha)-acyl-glutamine aminoacylase of Corynebacterium striatum.